A 627-amino-acid chain; its full sequence is uncharacterized protein (627 aa).

The span at 1–20 (MAKFKKDLTTKNKDTDRLSE) shows a compositional bias: basic and acidic residues. Disordered regions lie at residues 1-22 (MAKF…SEEI) and 578-606 (LSLG…LLPV). The span at 582–592 (SEEEQGQEETE) shows a compositional bias: acidic residues.

This is an uncharacterized protein from Rickettsia prowazekii (strain Madrid E).